Reading from the N-terminus, the 1050-residue chain is Isoleucine--tRNA ligase (1050 aa).

A 'HIGH' region motif is present at residues 45 to 56 (PYPSSPIPHIGT). Residues 594–598 (EMHKS) carry the 'KMSKS' region motif. Lys-597 is a binding site for ATP.

The protein belongs to the class-I aminoacyl-tRNA synthetase family. IleS type 2 subfamily. As to quaternary structure, monomer. It depends on Zn(2+) as a cofactor.

The protein resides in the cytoplasm. It catalyses the reaction tRNA(Ile) + L-isoleucine + ATP = L-isoleucyl-tRNA(Ile) + AMP + diphosphate. Catalyzes the attachment of isoleucine to tRNA(Ile). As IleRS can inadvertently accommodate and process structurally similar amino acids such as valine, to avoid such errors it has two additional distinct tRNA(Ile)-dependent editing activities. One activity is designated as 'pretransfer' editing and involves the hydrolysis of activated Val-AMP. The other activity is designated 'posttransfer' editing and involves deacylation of mischarged Val-tRNA(Ile). The chain is Isoleucine--tRNA ligase from Sulfolobus acidocaldarius (strain ATCC 33909 / DSM 639 / JCM 8929 / NBRC 15157 / NCIMB 11770).